The primary structure comprises 355 residues: MEPHLLGLLLGLLLGGTRVLAGYPIWWSLALGQQYTSLGSQPLLCGSIPGLVPKQLRFCRNYIEIMPSVAEGVKLGIQECQHQFRGRRWNCTTIDDSLAIFGPVLDKATRESAFVHAIASAGVAFAVTRSCAEGTSTICGCDSHHKGPPGEGWKWGGCSEDADFGVLVSREFADARENRPDARSAMNKHNNEAGRTTILDHMHLKCKCHGLSGSCEVKTCWWAQPDFRAIGDFLKDKYDSASEMVVEKHRESRGWVETLRAKYSLFKPPTERDLVYYENSPNFCEPNPETGSFGTRDRTCNVTSHGIDGCDLLCCGRGHNTRTEKRKEKCHCIFHWCCYVSCQECIRIYDVHTCK.

Positions 1-21 are cleaved as a signal peptide; sequence MEPHLLGLLLGLLLGGTRVLA. 11 disulfides stabilise this stretch: Cys-80-Cys-91, Cys-131-Cys-139, Cys-141-Cys-158, Cys-206-Cys-220, Cys-208-Cys-215, Cys-284-Cys-315, Cys-300-Cys-310, Cys-314-Cys-354, Cys-330-Cys-345, Cys-332-Cys-342, and Cys-337-Cys-338. Asn-90 is a glycosylation site (N-linked (GlcNAc...) asparagine). A lipid anchor (O-palmitoleoyl serine; by PORCN) is attached at Ser-212. Asn-301 carries an N-linked (GlcNAc...) asparagine glycan.

Belongs to the Wnt family. As to quaternary structure, forms a soluble 1:1 complex with AFM; this prevents oligomerization and is required for prolonged biological activity. The complex with AFM may represent the physiological form in body fluids. Interacts with PORCN. Interacts with WLS. Palmitoleoylation is required for efficient binding to frizzled receptors. Depalmitoleoylation leads to Wnt signaling pathway inhibition.

It is found in the secreted. The protein resides in the extracellular space. It localises to the extracellular matrix. Functionally, ligand for members of the frizzled family of seven transmembrane receptors. Functions in the canonical Wnt signaling pathway that results in activation of transcription factors of the TCF/LEF family. Required for normal gastrulation, formation of the primitive streak, and for the formation of the mesoderm during early embryogenesis. Required for normal formation of the apical ectodermal ridge. Required for normal embryonic development, and especially for limb development. The polypeptide is Proto-oncogene Wnt-3 (WNT3) (Homo sapiens (Human)).